A 45-amino-acid polypeptide reads, in one-letter code: AAEVAPCELTVAPSGLSFCDKVVGTGPQAVKGQLIKAHYVGRLEN.

This sequence belongs to the FKBP-type PPIase family. Expressed in leaves, but not in roots.

It is found in the plastid. The protein localises to the chloroplast thylakoid lumen. The catalysed reaction is [protein]-peptidylproline (omega=180) = [protein]-peptidylproline (omega=0). In terms of biological role, PPIases accelerate the folding of proteins. It catalyzes the cis-trans isomerization of proline imidic peptide bonds in oligopeptides. In Vicia faba (Broad bean), this protein is FKBP-type peptidyl-prolyl cis-trans isomerase, chloroplastic.